The chain runs to 152 residues: Ribosomal RNA large subunit methyltransferase H (152 aa).

Residues Leu-68, Gly-100, and 119 to 124 (LGVMTW) each bind S-adenosyl-L-methionine.

The protein belongs to the RNA methyltransferase RlmH family. As to quaternary structure, homodimer.

The protein localises to the cytoplasm. It catalyses the reaction pseudouridine(1915) in 23S rRNA + S-adenosyl-L-methionine = N(3)-methylpseudouridine(1915) in 23S rRNA + S-adenosyl-L-homocysteine + H(+). In terms of biological role, specifically methylates the pseudouridine at position 1915 (m3Psi1915) in 23S rRNA. The chain is Ribosomal RNA large subunit methyltransferase H from Rhodospirillum rubrum (strain ATCC 11170 / ATH 1.1.1 / DSM 467 / LMG 4362 / NCIMB 8255 / S1).